Reading from the N-terminus, the 169-residue chain is MPLLDSFTVDHTRMNAPAVRVAKHMSTPKGDAITVFDLRFCAPNKDILSERGIHTLEHLFAGFMRDHLNGSNVEIIDISPMGCRTGFYMSLIGEPTERQVADAWLAAMEDVLKVVEQSEIPELNEYQCGTYEMHSLEQAQDIARNIIAAGVSVNRNDDLKLSDEILGNL.

Positions 54, 58, and 128 each coordinate Fe cation.

It belongs to the LuxS family. Homodimer. Fe cation is required as a cofactor.

It carries out the reaction S-(5-deoxy-D-ribos-5-yl)-L-homocysteine = (S)-4,5-dihydroxypentane-2,3-dione + L-homocysteine. Functionally, involved in the synthesis of autoinducer 2 (AI-2) which is secreted by bacteria and is used to communicate both the cell density and the metabolic potential of the environment. The regulation of gene expression in response to changes in cell density is called quorum sensing. Catalyzes the transformation of S-ribosylhomocysteine (RHC) to homocysteine (HC) and 4,5-dihydroxy-2,3-pentadione (DPD). The sequence is that of S-ribosylhomocysteine lyase from Shewanella baltica (strain OS223).